We begin with the raw amino-acid sequence, 121 residues long: Small ribosomal subunit protein uS13 (121 aa).

Residues 97–121 (VRGQRTRTNARTRRGARKTVAGKKK) form a disordered region. The segment covering 100 to 121 (QRTRTNARTRRGARKTVAGKKK) has biased composition (basic residues).

Belongs to the universal ribosomal protein uS13 family. In terms of assembly, part of the 30S ribosomal subunit. Forms a loose heterodimer with protein S19. Forms two bridges to the 50S subunit in the 70S ribosome.

Located at the top of the head of the 30S subunit, it contacts several helices of the 16S rRNA. In the 70S ribosome it contacts the 23S rRNA (bridge B1a) and protein L5 of the 50S subunit (bridge B1b), connecting the 2 subunits; these bridges are implicated in subunit movement. Contacts the tRNAs in the A and P-sites. This chain is Small ribosomal subunit protein uS13, found in Prochlorococcus marinus (strain MIT 9313).